We begin with the raw amino-acid sequence, 321 residues long: MEIDLDSIITRLLEPRTTKPGKLVDLAEEEIRYLTVQATEIFINQPILLELEAPIKICGDIHGQYYDLLRLFEYGGFPPQSNYLFLGDYVDRGKQSLETICLLLAYKIKYPENFFILRGNHECASINRIYGFYDECKRRYNSKLWKAFTDCFNCLPVAAIIDEKIFCMHGGLSPDLKNMDQIRRITRPTVVPDFGLLCDLLWADPDKNIQGWEDNDRGVSYTFGADVVESFLKKHDLDLVCRAHQVVEDGYEFFAKRQLVTLFSAPNYFGEFDNAGAMMGVDETLMCSFQILKPADKKKLTNDSNGRPLTPPRNKQQKPKK.

Positions 60, 62, 88, and 120 each coordinate Mn(2+). Histidine 121 acts as the Proton donor in catalysis. Positions 169 and 244 each coordinate Mn(2+). The segment at 298–321 (KKLTNDSNGRPLTPPRNKQQKPKK) is disordered.

Belongs to the PPP phosphatase family. In terms of assembly, interacts with dpiA. Requires Mn(2+) as cofactor.

The catalysed reaction is O-phospho-L-seryl-[protein] + H2O = L-seryl-[protein] + phosphate. It carries out the reaction O-phospho-L-threonyl-[protein] + H2O = L-threonyl-[protein] + phosphate. Its activity is regulated as follows. Inhibited by okadaic acid, tautomycin and calyculin A. Inhibited by phosphatase inhibitor 2 (dpiA). Functionally, protein phosphatase activity in vitro. This chain is Serine/threonine-protein phosphatase PP1 (pppB), found in Dictyostelium discoideum (Social amoeba).